The sequence spans 211 residues: dITP/XTP pyrophosphatase (211 aa).

A substrate-binding site is contributed by 7-12 (TSNKKK). Residues Glu43 and Asp72 each contribute to the Mg(2+) site. Asp72 acts as the Proton acceptor in catalysis. Substrate-binding positions include Ser73, 169 to 172 (FGYD), Lys190, and 195 to 196 (HR).

Belongs to the HAM1 NTPase family. In terms of assembly, homodimer. Requires Mg(2+) as cofactor.

The catalysed reaction is XTP + H2O = XMP + diphosphate + H(+). The enzyme catalyses dITP + H2O = dIMP + diphosphate + H(+). It carries out the reaction ITP + H2O = IMP + diphosphate + H(+). Functionally, pyrophosphatase that catalyzes the hydrolysis of nucleoside triphosphates to their monophosphate derivatives, with a high preference for the non-canonical purine nucleotides XTP (xanthosine triphosphate), dITP (deoxyinosine triphosphate) and ITP. Seems to function as a house-cleaning enzyme that removes non-canonical purine nucleotides from the nucleotide pool, thus preventing their incorporation into DNA/RNA and avoiding chromosomal lesions. The chain is dITP/XTP pyrophosphatase from Hydrogenobaculum sp. (strain Y04AAS1).